The primary structure comprises 132 residues: Fatty acid-binding protein 1 (132 aa).

N-acetylalanine is present on Ala-2.

The protein belongs to the calycin superfamily. Fatty-acid binding protein (FABP) family.

In Fasciola gigantica (Giant liver fluke), this protein is Fatty acid-binding protein 1 (FABP-1).